A 507-amino-acid chain; its full sequence is MIHLTGENLKFKEIEKVINHGEQVELSTQAKENIIASRRLIDDLTEKESIVYGVTTGFGKFSDTFISSENLQQLQENLILSHSAGVGEPFSEQVVRGMMLFRANSLAKGHSGIRLETVQLLIDMLNKGVHPIIPSKGSLGASGDLAPLAHMVLVMIGKGEAYYHGDRMAGDKALSEAGLSPVKLGAKEGLALINGTQAIVSVGTLTWLRMKNLLKTADICAAMTIDSLEGILDAFQDKIFRLRPHPGHGKTAENIRRLLQDSEIIENREHKRVQDAYTLRCIPQIHGASKDAHEHIGGILNREINSTTDNPLIFPQENEVISGGNFHGQPLALPMDYMSMAIAELANVAERRIERLVNPNLNFGLPPFLIKDGGVSSGFMIAQYTAASLVSENKSLAHPASVDSIPSSANQEDHVSMGTIGARKALSILENTEKVLAIELLCASQALDYRQPRQSGSGTRKAYELVREQVPHLAEDRELASDIETVEQLIVEGRLVSELEKTIGELK.

The segment at residues 141–143 is a cross-link (5-imidazolinone (Ala-Gly)); it reads ASG. The residue at position 142 (Ser-142) is a 2,3-didehydroalanine (Ser).

This sequence belongs to the PAL/histidase family. In terms of processing, contains an active site 4-methylidene-imidazol-5-one (MIO), which is formed autocatalytically by cyclization and dehydration of residues Ala-Ser-Gly.

Its subcellular location is the cytoplasm. The enzyme catalyses L-histidine = trans-urocanate + NH4(+). It participates in amino-acid degradation; L-histidine degradation into L-glutamate; N-formimidoyl-L-glutamate from L-histidine: step 1/3. This Natranaerobius thermophilus (strain ATCC BAA-1301 / DSM 18059 / JW/NM-WN-LF) protein is Histidine ammonia-lyase.